The chain runs to 617 residues: Zinc finger protein 221 (617 aa).

Residues 30–100 (VTFKDVAVVF…KTTSQREGNS (71 aa)) enclose the KRAB domain. 3 C2H2-type zinc fingers span residues 170-192 (YRCNECKQSFSDVSVFDLHQQSH), 198-220 (HTCGECGKSFCYSPALHIHQRVH), and 226-248 (YKCDVCGKEFNQSSHLQTHQRVH). The C2H2-type 4; degenerate zinc finger occupies 254–276 (FKCGQCGKGFHSRSALNVHCKLH). 11 consecutive C2H2-type zinc fingers follow at residues 282–304 (YNCEECGKAFIHDSQLQEHQRIH), 310–332 (FKCDICGKSFRVRSRLNRHSMVH), 338–360 (FRCDTCGKNFRQRSALNSHSMVH), 366–388 (YKCEQCGKGFICRRDFCKHQMVH), 394–416 (YNCKECGKTFRWSSCLLNHQQVH), 422–444 (FKCEECGKGFYTNSRRSSHQRSH), 450–472 (YNCEECGKDYKRRLDLEFHQRVH), 478–500 (YNCKECGKSFGWASCLLKHQRLH), 506–528 (FKCEECGKRFTQSSQLHSHQTCH), 534–556 (YKCEQCEKGYNSKFNLDMHQRVH), and 562–584 (YNCKECGKSFGWASCLLKHQRLH).

This sequence belongs to the krueppel C2H2-type zinc-finger protein family.

The protein localises to the nucleus. Functionally, may be involved in transcriptional regulation. This chain is Zinc finger protein 221 (ZNF221), found in Homo sapiens (Human).